We begin with the raw amino-acid sequence, 446 residues long: MKANKYLIFILGALGGLLYGYDNGVISGALLFIHKDIPLNSTTEGIVVSSMLIGAIVGAGSSGPLADKLGRRRLVMLIAIVFIIGALILAASTNLALLIIGRLIIGLAVGGSMSTVPVYLSEMAPTEYRGSLGSLNQLMITIGILAAYLVNYAFADIEGWRWMLGLAVVPSVILLVGIYFMPESPRWLLENRNEEAARQVMKITYDDSEIDKELKEMKEINAISESTWTVIKSPWLGRILIVGCIFAIFQQFIGINAVIFYSSSIFAKAGLGEAASILGSVGIGTINVLVTIVAIFVVDKIDRKKLLVGGNIGMIASLLIMAILIWTIGIASSAWIIIVCLSLFIVFFGISWGPVLWVMLPELFPMRARGAATGISALVLNIGTLIVSLFFPILSDALSTEWVFLIFAFIGVLAMIFVIKFLPETRGRSLEEIEYELRERTGARTE.

Topologically, residues 1-6 (MKANKY) are cytoplasmic. Residues 7 to 31 (LIFILGALGGLLYGYDNGVISGALL) form a helical membrane-spanning segment. Topologically, residues 32–38 (FIHKDIP) are extracellular. A helical membrane pass occupies residues 39 to 64 (LNSTTEGIVVSSMLIGAIVGAGSSGP). Over 65 to 70 (LADKLG) the chain is Cytoplasmic. The chain crosses the membrane as a helical span at residues 71–90 (RRRLVMLIAIVFIIGALILA). At 91–94 (ASTN) the chain is on the extracellular side. A helical transmembrane segment spans residues 95–122 (LALLIIGRLIIGLAVGGSMSTVPVYLSE). Over 123-129 (MAPTEYR) the chain is Cytoplasmic. The helical transmembrane segment at 130–152 (GSLGSLNQLMITIGILAAYLVNY) threads the bilayer. The Extracellular portion of the chain corresponds to 153–154 (AF). The helical transmembrane segment at 155–180 (ADIEGWRWMLGLAVVPSVILLVGIYF) threads the bilayer. Residues 181–234 (MPESPRWLLENRNEEAARQVMKITYDDSEIDKELKEMKEINAISESTWTVIKSP) lie on the Cytoplasmic side of the membrane. The chain crosses the membrane as a helical span at residues 235–269 (WLGRILIVGCIFAIFQQFIGINAVIFYSSSIFAKA). The Extracellular segment spans residues 270 to 272 (GLG). The helical transmembrane segment at 273–295 (EAASILGSVGIGTINVLVTIVAI) threads the bilayer. Topologically, residues 296–303 (FVVDKIDR) are cytoplasmic. Residues 304–324 (KKLLVGGNIGMIASLLIMAIL) traverse the membrane as a helical segment. Residues 325–329 (IWTIG) are Extracellular-facing. Residues 330–363 (IASSAWIIIVCLSLFIVFFGISWGPVLWVMLPEL) traverse the membrane as a helical segment. Over 364–370 (FPMRARG) the chain is Cytoplasmic. The helical transmembrane segment at 371 to 399 (AATGISALVLNIGTLIVSLFFPILSDALS) threads the bilayer. The Extracellular segment spans residues 400 to 401 (TE). A helical membrane pass occupies residues 402–420 (WVFLIFAFIGVLAMIFVIK). Residues 421–446 (FLPETRGRSLEEIEYELRERTGARTE) are Cytoplasmic-facing.

This sequence belongs to the major facilitator superfamily. Sugar transporter (TC 2.A.1.1) family.

The protein localises to the cell membrane. With respect to regulation, inhibited by carbonyl cyanide m-chlorophenylhydrazone (CCCP) and by the human glucose transport inhibitors cytochalasin B, phloretin, and forskolin. Functionally, transporter highly specific for glucose uptake. The sequence is that of Glucose transporter GlcP from Staphylococcus epidermidis (strain ATCC 12228 / FDA PCI 1200).